Here is a 77-residue protein sequence, read N- to C-terminus: Oxyopinin-4a (77 aa).

Positions 1-20 (MKISQVFIFVFLLMISVAWA) are cleaved as a signal peptide. Positions 21–47 (NEAYEEESNYLSERFDADVEEITPEFR) are excised as a propeptide. A disulfide bond links cysteine 51 and cysteine 57.

As to expression, expressed by the venom gland.

It is found in the secreted. The protein resides in the target cell membrane. Functionally, disrupts cell membranes through the formation of pores. Has antibacterial activity against Gram-positive bacteria S.aureus (MIC=10 uM) and B.subtilis (MIC=0.5 uM) as well as Gram-negative bacteria P.fluorescens (MIC=1 uM) and E.coli (MIC=0.5 uM). Has hemolytic activity against human erythrocytes (EC(50)=7 uM). The chain is Oxyopinin-4a from Oxyopes takobius (Lynx spider).